Reading from the N-terminus, the 287-residue chain is Acetyl-coenzyme A carboxylase carboxyl transferase subunit beta (287 aa).

Residues 33-287 (LFSKCPGCKH…TLLAFHGGQA (255 aa)) form the CoA carboxyltransferase N-terminal domain. Residues C37, C40, C55, and C58 each contribute to the Zn(2+) site. The segment at 37–58 (CPGCKHTIYQKDLGNDSVCPNC) adopts a C4-type zinc-finger fold.

Belongs to the AccD/PCCB family. In terms of assembly, acetyl-CoA carboxylase is a heterohexamer composed of biotin carboxyl carrier protein (AccB), biotin carboxylase (AccC) and two subunits each of ACCase subunit alpha (AccA) and ACCase subunit beta (AccD). Zn(2+) is required as a cofactor.

Its subcellular location is the cytoplasm. The enzyme catalyses N(6)-carboxybiotinyl-L-lysyl-[protein] + acetyl-CoA = N(6)-biotinyl-L-lysyl-[protein] + malonyl-CoA. It functions in the pathway lipid metabolism; malonyl-CoA biosynthesis; malonyl-CoA from acetyl-CoA: step 1/1. Component of the acetyl coenzyme A carboxylase (ACC) complex. Biotin carboxylase (BC) catalyzes the carboxylation of biotin on its carrier protein (BCCP) and then the CO(2) group is transferred by the transcarboxylase to acetyl-CoA to form malonyl-CoA. The polypeptide is Acetyl-coenzyme A carboxylase carboxyl transferase subunit beta (Streptococcus sanguinis (strain SK36)).